Here is a 147-residue protein sequence, read N- to C-terminus: Ribosomal RNA large subunit methyltransferase H (147 aa).

Residues leucine 66, glycine 95, and 114-119 (LSELTF) each bind S-adenosyl-L-methionine.

Belongs to the RNA methyltransferase RlmH family. In terms of assembly, homodimer.

It is found in the cytoplasm. It catalyses the reaction pseudouridine(1915) in 23S rRNA + S-adenosyl-L-methionine = N(3)-methylpseudouridine(1915) in 23S rRNA + S-adenosyl-L-homocysteine + H(+). Its function is as follows. Specifically methylates the pseudouridine at position 1915 (m3Psi1915) in 23S rRNA. This chain is Ribosomal RNA large subunit methyltransferase H, found in Synechococcus sp. (strain RCC307).